Reading from the N-terminus, the 612-residue chain is Pentatricopeptide repeat-containing protein At4g14050, mitochondrial (612 aa).

Residues Met-1–Ala-24 constitute a mitochondrion transit peptide. 11 PPR repeats span residues Cys-37–Ala-71, Trp-72–Pro-103, Asp-104–Asn-138, Asp-139–Lys-169, Asn-170–Ser-204, Trp-205–Ile-235, Asp-237–Ser-271, Cys-272–Arg-302, Asp-303–Pro-337, Asn-338–Pro-373, and Ser-374–Pro-408. The tract at residues Thr-409–Arg-485 is type E motif. The type E(+) motif stretch occupies residues Lys-486–Arg-516. Positions Arg-518–Trp-612 are type DYW motif.

The protein belongs to the PPR family. PCMP-H subfamily. In terms of assembly, interacts with MORF8/RIP1 and MORF1/RIP8.

Its subcellular location is the mitochondrion. Involved in C-to-U editing of mitochondrial RNA. Required specifically for editing the mitochondrial NAD4, MT-CYB/COB and RPL16 transcripts. The protein is Pentatricopeptide repeat-containing protein At4g14050, mitochondrial (PCMP-H13) of Arabidopsis thaliana (Mouse-ear cress).